The following is a 282-amino-acid chain: Putative 4-diphosphocytidyl-2-C-methyl-D-erythritol kinase (282 aa).

The active site involves Lys-9. 93-103 (PVSAGLAGGST) lines the ATP pocket. Asp-135 is a catalytic residue.

Belongs to the GHMP kinase family. IspE subfamily.

The enzyme catalyses 4-CDP-2-C-methyl-D-erythritol + ATP = 4-CDP-2-C-methyl-D-erythritol 2-phosphate + ADP + H(+). Its function is as follows. Catalyzes the phosphorylation of the position 2 hydroxy group of 4-diphosphocytidyl-2C-methyl-D-erythritol. The sequence is that of Putative 4-diphosphocytidyl-2-C-methyl-D-erythritol kinase from Staphylococcus saprophyticus subsp. saprophyticus (strain ATCC 15305 / DSM 20229 / NCIMB 8711 / NCTC 7292 / S-41).